We begin with the raw amino-acid sequence, 189 residues long: Elongation factor P 2 (189 aa).

This sequence belongs to the elongation factor P family.

Its subcellular location is the cytoplasm. It functions in the pathway protein biosynthesis; polypeptide chain elongation. Its function is as follows. Involved in peptide bond synthesis. Stimulates efficient translation and peptide-bond synthesis on native or reconstituted 70S ribosomes in vitro. Probably functions indirectly by altering the affinity of the ribosome for aminoacyl-tRNA, thus increasing their reactivity as acceptors for peptidyl transferase. This Mesorhizobium japonicum (strain LMG 29417 / CECT 9101 / MAFF 303099) (Mesorhizobium loti (strain MAFF 303099)) protein is Elongation factor P 2.